Here is a 147-residue protein sequence, read N- to C-terminus: MPLSPYLSFAGNCSDAIAYYQRTLGAELLYKISFGEMPKSAQDSAENCPSGMQFPDTAIAHANVRIAGSDIMMSDAMPSGKASYSGFTLVLDSQQVEEGKRWFDNLAANGKIEMAWQETFWAHGFGKVTDKFGVPWMINVVKQQPTQ.

This is Protein YjdN (yjdN) from Escherichia coli (strain K12).